The following is a 471-amino-acid chain: Metal tolerance protein C1 (471 aa).

Residues 1–78 (MGIIRFQILN…PGEEGEKIFR (78 aa)) lie on the Cytoplasmic side of the membrane. Residues 79–99 (LGLTADIGLSVAKALTGYLCG) form a helical membrane-spanning segment. The Vacuolar segment spans residues 100 to 101 (ST). The chain crosses the membrane as a helical span at residues 102–122 (AIIADAAHSVSDVVLSGVALV). At 123–144 (SYRAANVPKDKEHPYGHGKFET) the chain is on the cytoplasmic side. A helical transmembrane segment spans residues 145–165 (LGALGISAMLLATGSGIAWHA). Residues 166–192 (LDLLSIALSAAPEVIHSGHHHGIDMNH) are Vacuolar-facing. Residues 193–213 (PILALTVTIASISIKEGLYWI) traverse the membrane as a helical segment. Over 214–236 (TKRAGEKQGSGLMMANAWHHRSD) the chain is Cytoplasmic. The helical transmembrane segment at 237 to 257 (AISSLVALVGVGGSILGVNFL) threads the bilayer. Topologically, residues 258-423 (DPLAGLVVST…RITPHLLHSK (166 aa)) are vacuolar. A helical membrane pass occupies residues 424 to 444 (ILLQIVVAMPSTMSIQDVMIA). The Cytoplasmic portion of the chain corresponds to 445–471 (AEHAEKEILKAAPNVARVSIQLSLNSE).

This sequence belongs to the cation diffusion facilitator (CDF) transporter (TC 2.A.4) family.

The protein localises to the vacuole membrane. Its function is as follows. Involved in sequestration of excess metal in the cytoplasm into vacuoles to maintain metal homeostasis. In Arabidopsis thaliana (Mouse-ear cress), this protein is Metal tolerance protein C1 (MTPC1).